The sequence spans 422 residues: Serine--tRNA ligase (422 aa).

L-serine is bound at residue 229–231; the sequence is TAE. 260–262 is a binding site for ATP; sequence RKE. Glu283 serves as a coordination point for L-serine. 347–350 provides a ligand contact to ATP; it reads EISS. Ser383 lines the L-serine pocket.

This sequence belongs to the class-II aminoacyl-tRNA synthetase family. Type-1 seryl-tRNA synthetase subfamily. Homodimer. The tRNA molecule binds across the dimer.

It is found in the cytoplasm. The catalysed reaction is tRNA(Ser) + L-serine + ATP = L-seryl-tRNA(Ser) + AMP + diphosphate + H(+). The enzyme catalyses tRNA(Sec) + L-serine + ATP = L-seryl-tRNA(Sec) + AMP + diphosphate + H(+). It participates in aminoacyl-tRNA biosynthesis; selenocysteinyl-tRNA(Sec) biosynthesis; L-seryl-tRNA(Sec) from L-serine and tRNA(Sec): step 1/1. Its function is as follows. Catalyzes the attachment of serine to tRNA(Ser). Is also able to aminoacylate tRNA(Sec) with serine, to form the misacylated tRNA L-seryl-tRNA(Sec), which will be further converted into selenocysteinyl-tRNA(Sec). This chain is Serine--tRNA ligase, found in Geobacter sulfurreducens (strain ATCC 51573 / DSM 12127 / PCA).